The primary structure comprises 241 residues: Biosynthetic peptidoglycan transglycosylase (241 aa).

A helical membrane pass occupies residues 18–38; it reads GVIGIIALWMAGILIFAFLPV.

Belongs to the glycosyltransferase 51 family.

Its subcellular location is the cell inner membrane. It catalyses the reaction [GlcNAc-(1-&gt;4)-Mur2Ac(oyl-L-Ala-gamma-D-Glu-L-Lys-D-Ala-D-Ala)](n)-di-trans,octa-cis-undecaprenyl diphosphate + beta-D-GlcNAc-(1-&gt;4)-Mur2Ac(oyl-L-Ala-gamma-D-Glu-L-Lys-D-Ala-D-Ala)-di-trans,octa-cis-undecaprenyl diphosphate = [GlcNAc-(1-&gt;4)-Mur2Ac(oyl-L-Ala-gamma-D-Glu-L-Lys-D-Ala-D-Ala)](n+1)-di-trans,octa-cis-undecaprenyl diphosphate + di-trans,octa-cis-undecaprenyl diphosphate + H(+). It functions in the pathway cell wall biogenesis; peptidoglycan biosynthesis. Its function is as follows. Peptidoglycan polymerase that catalyzes glycan chain elongation from lipid-linked precursors. This chain is Biosynthetic peptidoglycan transglycosylase, found in Yersinia pestis bv. Antiqua (strain Antiqua).